The sequence spans 382 residues: Glutamine synthetase cytosolic isozyme (382 aa).

Positions 36–118 (GKICAEYVWI…VMCDCYEPPK (83 aa)) constitute a GS beta-grasp domain. A GS catalytic domain is found at 135–382 (TRFACAEVME…RLIVETTILL (248 aa)).

It belongs to the glutamine synthetase family. In terms of assembly, homooctamer.

Its subcellular location is the cytoplasm. The catalysed reaction is L-glutamate + NH4(+) + ATP = L-glutamine + ADP + phosphate + H(+). The sequence is that of Glutamine synthetase cytosolic isozyme (GLN1) from Chlamydomonas reinhardtii (Chlamydomonas smithii).